Consider the following 967-residue polypeptide: MSEYKETLNLLQTPFPMKGDLPRREPALVERWAAQRVYARMRAAAAGRPPFVLHDGPPYANGDIHIGHAVNKVLKDIVLKSRFAAGYDAQWIPGWDCHGMPIEHRIEQLHGRGLPPAAVQRLCREYAFEQTERQRRDFLRLGLLGDWPHAFRTMDFRTEANELRFLERIRARGLLYRGQKPVNWCVDCQSALAEAELEYARKTSVAIHAGLRVRDPVDFASRFRRRPVLDKPAMLVVWTTTPWTIPGNAAAGVRADAPYGLYDTPGALIVVAQPLADALFASLGVDHALCALARGRELVGLALGQPFFAGRDVPVVEAEFVTLDAGTGIVHLAPAHGAEDAELCRRLGIAGENVVDGAGRFAADLPEIGGLPLADGIARIVAKLRADGTLVREAAFEHAYPHCWRHKTPILFRSTPQWFIGMDIECEQGEADPGRAAVTEEAGATGEARKVGKAEEAEEAGPAKTLRASARDAIADVPFYPPSARQRMEAMIDGRPDWCVSRQRTWGVPLPYFVRRDDRSLHPRSARLVEAVAARVERDGIAAWSRLRPAELGVDENAYEKLSDTLDVWFDSGSIHATVYRDAARADTGGYPADLYLEGADQHRGWFGASLMTGCAADGRAPFRAILTHGFVVDGAGRKMSKSLGNTVSPQRIADTRGADILRLWIASTDYAAEMSISDEILERVVETYRRMRNTLRFLLQNVADFDPRDDAVPAGQLLDVDRYALARCREFVDACRSAYARYDFVAVTRLAHGYCAEELGGFYLDALKDRLYASVADGVERRAAQTALHSVLANLLISIAPILSFTAEEAWTVFAGDERDSVFLHTWDEHAPPPDDAALARWAHVRALRPHVTKALEEARGAALIGRSSEAELVVRAPRDVLDALAPLHGELAAVFIVAGVTLETADQIAVAVARTPLARCERCWRHEPSVAAHASGDALCARCRHALSRRARAERSEPRAAVGSR.

Residues 58–68 carry the 'HIGH' region motif; sequence PYANGDIHIGH. The segment covering 437 to 446 has biased composition (low complexity); the sequence is AVTEEAGATG. The interval 437–466 is disordered; it reads AVTEEAGATGEARKVGKAEEAEEAGPAKTL. E598 serves as a coordination point for L-isoleucyl-5'-AMP. The short motif at 639-643 is the 'KMSKS' region element; that stretch reads KMSKS. Position 642 (K642) interacts with ATP. 4 residues coordinate Zn(2+): C922, C925, C942, and C945.

Belongs to the class-I aminoacyl-tRNA synthetase family. IleS type 1 subfamily. As to quaternary structure, monomer. Zn(2+) is required as a cofactor.

Its subcellular location is the cytoplasm. It catalyses the reaction tRNA(Ile) + L-isoleucine + ATP = L-isoleucyl-tRNA(Ile) + AMP + diphosphate. Functionally, catalyzes the attachment of isoleucine to tRNA(Ile). As IleRS can inadvertently accommodate and process structurally similar amino acids such as valine, to avoid such errors it has two additional distinct tRNA(Ile)-dependent editing activities. One activity is designated as 'pretransfer' editing and involves the hydrolysis of activated Val-AMP. The other activity is designated 'posttransfer' editing and involves deacylation of mischarged Val-tRNA(Ile). The sequence is that of Isoleucine--tRNA ligase 2 from Burkholderia mallei (strain ATCC 23344).